We begin with the raw amino-acid sequence, 307 residues long: Ribosomal RNA small subunit methyltransferase H (307 aa).

S-adenosyl-L-methionine contacts are provided by residues 32–34 (GGH), D52, F78, D100, and Q107.

It belongs to the methyltransferase superfamily. RsmH family.

The protein resides in the cytoplasm. The enzyme catalyses cytidine(1402) in 16S rRNA + S-adenosyl-L-methionine = N(4)-methylcytidine(1402) in 16S rRNA + S-adenosyl-L-homocysteine + H(+). Functionally, specifically methylates the N4 position of cytidine in position 1402 (C1402) of 16S rRNA. The polypeptide is Ribosomal RNA small subunit methyltransferase H (Coxiella burnetii (strain CbuG_Q212) (Coxiella burnetii (strain Q212))).